Here is a 163-residue protein sequence, read N- to C-terminus: Nucleotide-binding protein BSU11020 (163 aa).

This sequence belongs to the YajQ family.

Functionally, nucleotide-binding protein. The chain is Nucleotide-binding protein BSU11020 (yitK) from Bacillus subtilis (strain 168).